We begin with the raw amino-acid sequence, 42 residues long: uncharacterized protein (42 aa).

A helical membrane pass occupies residues 15-35 (INVCLSFFFLFYFIFVLFFAA).

It is found in the membrane. This is an uncharacterized protein from Dictyostelium discoideum (Social amoeba).